A 329-amino-acid polypeptide reads, in one-letter code: Carbohydrate sulfotransferase chst-1 (329 aa).

Residues 1-3 (MLK) are Cytoplasmic-facing. A helical; Signal-anchor for type II membrane protein membrane pass occupies residues 4–23 (WFIISCCLLTAISYSTYYLF). Topologically, residues 24–329 (TSNSWIKTVK…FDFDTTFINS (306 aa)) are lumenal. 3'-phosphoadenylyl sulfate is bound by residues 91–97 (KKSMSTL) and 157–165 (RDPIARFIS).

It belongs to the sulfotransferase 2 family. As to expression, highly expressed in the head and tail of hermaphrodites, in particular in amphid and phasmid sheath cells.

It localises to the golgi apparatus membrane. The enzyme catalyses chondroitin beta-D-glucuronate + n 3'-phosphoadenylyl sulfate = chondroitin 4'-sulfate + n adenosine 3',5'-bisphosphate + n H(+). Its function is as follows. Catalyzes the transfer of sulfate to position 4 of non-reducing N-acetylgalactosamine (GalNAc) residue of chondroitin. The sequence is that of Carbohydrate sulfotransferase chst-1 from Caenorhabditis elegans.